The following is a 478-amino-acid chain: Islet cell autoantigen 1 (478 aa).

The 204-residue stretch at 50–253 (ASDADLDAKL…TSHTMAAIHE (204 aa)) folds into the AH domain. Residues 306–317 (EHKDSSAYKTEE) show a composition bias toward basic and acidic residues. Disordered stretches follow at residues 306 to 365 (EHKD…SGDK) and 398 to 422 (LKEP…GFLP).

In terms of tissue distribution, predominantly expressed in brain, pancreas and stomach mucosa. High expression also found in stomach muscle and testis.

It is found in the cytoplasm. The protein resides in the cytosol. Its subcellular location is the golgi apparatus membrane. The protein localises to the cytoplasmic vesicle. It localises to the secretory vesicle membrane. It is found in the secretory vesicle. The protein resides in the synaptic vesicle membrane. May play a role in neurotransmitter secretion. The chain is Islet cell autoantigen 1 from Mus musculus (Mouse).